Reading from the N-terminus, the 264-residue chain is tRNA (guanine-N(1)-)-methyltransferase (264 aa).

Residues glycine 125 and 145 to 150 (LGDFVL) each bind S-adenosyl-L-methionine.

This sequence belongs to the RNA methyltransferase TrmD family. In terms of assembly, homodimer.

Its subcellular location is the cytoplasm. It catalyses the reaction guanosine(37) in tRNA + S-adenosyl-L-methionine = N(1)-methylguanosine(37) in tRNA + S-adenosyl-L-homocysteine + H(+). Functionally, specifically methylates guanosine-37 in various tRNAs. The chain is tRNA (guanine-N(1)-)-methyltransferase from Burkholderia ambifaria (strain ATCC BAA-244 / DSM 16087 / CCUG 44356 / LMG 19182 / AMMD) (Burkholderia cepacia (strain AMMD)).